The following is a 935-amino-acid chain: GPI ethanolamine phosphate transferase 1 (935 aa).

Topologically, residues 1–5 (MFGRL) are cytoplasmic. A helical transmembrane segment spans residues 6–26 (LLLGILFHVVFLKSIFDIYFV). Residues 27–449 (TPLIHGMKQY…LQRYDWLLLR (423 aa)) are Lumenal-facing. 4 N-linked (GlcNAc...) asparagine glycosylation sites follow: Asn86, Asn134, Asn315, and Asn398. A helical membrane pass occupies residues 450 to 470 (SIVFFGYLSWIGYVICFVFSL). The Cytoplasmic portion of the chain corresponds to 471–483 (NIEPSSKIVKPVS). A helical membrane pass occupies residues 484 to 503 (VVKRVAFNIPFLLICIFFYI). Topologically, residues 504–509 (QSSPPF) are lumenal. A helical transmembrane segment spans residues 510-530 (YYGYALFPTIFLQLIHSIFPN). The Cytoplasmic segment spans residues 531–547 (TKLGFKNFLTVAKQKHG). A helical membrane pass occupies residues 548 to 568 (FSLLKILFISLCILCLLQFIV). Residues 569–576 (YSYFHREG) are Lumenal-facing. A helical membrane pass occupies residues 577-597 (FSVILMGLAAWPWLLHADYAF). Topologically, residues 598-600 (SHK) are cytoplasmic. Residues 601–621 (TISVSWSVLTSLLCFFTILPV) traverse the membrane as a helical segment. At 622 to 626 (NKKES) the chain is on the lumenal side. A helical membrane pass occupies residues 627–647 (LLFIFAGGFAMSVAGVFYILY). Residues 648–663 (RRNQAFQYSSTVTNKQ) are Cytoplasmic-facing. The chain crosses the membrane as a helical span at residues 664-684 (LVLQVLIIMATVPVTLKIADS). The Lumenal portion of the chain corresponds to 685–688 (LQRN). The chain crosses the membrane as a helical span at residues 689-709 (IAIPPILRLVAFGLFITSYII). The Cytoplasmic portion of the chain corresponds to 710–737 (PSHHIRSCKHYFLDRLAILFLTFSPTMC). The helical transmembrane segment at 738-758 (MLSISFEALFYVVLFITLGLW) threads the bilayer. The Lumenal segment spans residues 759–792 (MELETELQKYTEQLHPEYSRKKDAKFHLSLSHIR). A helical transmembrane segment spans residues 793–813 (ISLFFYIFINVAFFGTGNVAS). Over 814 to 835 (LSTFALDSVKRFIPVFNPVTQG) the chain is Cytoplasmic. The chain crosses the membrane as a helical span at residues 836–856 (ALLMYTILVPFIALSAAFGIM). The Lumenal portion of the chain corresponds to 857-865 (NKRLGGIQQ). Residues 866–886 (VTFFLAVGMADIVTINFFYLV) form a helical membrane-spanning segment. The Cytoplasmic portion of the chain corresponds to 887–894 (KDEGSWKD). A helical transmembrane segment spans residues 895–915 (IGVSISHFCISNFLILFITAL). Residues 916–935 (EHASAILCKNITYTIHEKVN) are Lumenal-facing. N-linked (GlcNAc...) asparagine glycosylation is present at Asn925.

The protein belongs to the PIGG/PIGN/PIGO family. PIGN subfamily.

The protein localises to the endoplasmic reticulum membrane. It functions in the pathway glycolipid biosynthesis; glycosylphosphatidylinositol-anchor biosynthesis. Ethanolamine phosphate transferase involved in glycosylphosphatidylinositol-anchor biosynthesis. Transfers ethanolamine phosphate to the first alpha-1,4-linked mannose of the glycosylphosphatidylinositol precursor of GPI-anchor. The sequence is that of GPI ethanolamine phosphate transferase 1 (its8) from Schizosaccharomyces pombe (strain 972 / ATCC 24843) (Fission yeast).